A 269-amino-acid chain; its full sequence is Undecaprenyl-diphosphatase (269 aa).

Transmembrane regions (helical) follow at residues glycine 40–phenylalanine 59, tryptophan 87–isoleucine 107, alanine 116–glycine 136, alanine 160–phenylalanine 180, phenylalanine 188–leucine 208, proline 220–leucine 240, and serine 247–phenylalanine 267.

Belongs to the UppP family.

The protein resides in the cell inner membrane. The catalysed reaction is di-trans,octa-cis-undecaprenyl diphosphate + H2O = di-trans,octa-cis-undecaprenyl phosphate + phosphate + H(+). Functionally, catalyzes the dephosphorylation of undecaprenyl diphosphate (UPP). Confers resistance to bacitracin. The protein is Undecaprenyl-diphosphatase of Geobacter metallireducens (strain ATCC 53774 / DSM 7210 / GS-15).